A 234-amino-acid polypeptide reads, in one-letter code: ATP synthase subunit a 2 (234 aa).

Transmembrane regions (helical) follow at residues 20-40, 78-98, 107-127, 169-189, and 194-214; these read ATLIFTWLVMGVLVVGSWFVT, YLPFIGTLFIFIALSNLLSVI, SLSTTTALALCVFFAVPLYGV, VMSGTMIVGILLSVAPLFFPV, and LGLLTGVIQAYIFAILAMVFI.

This sequence belongs to the ATPase A chain family. In terms of assembly, F-type ATPases have 2 components, CF(1) - the catalytic core - and CF(0) - the membrane proton channel. CF(1) has five subunits: alpha(3), beta(3), gamma(1), delta(1), epsilon(1). CF(0) has four main subunits: a, b, b' and c.

The protein resides in the cellular thylakoid membrane. Functionally, key component of the proton channel; it plays a direct role in the translocation of protons across the membrane. In Acaryochloris marina (strain MBIC 11017), this protein is ATP synthase subunit a 2.